The chain runs to 1040 residues: Protocadherin-10 (1040 aa).

The first 18 residues, 1–18 (MIVLLLFALLWMVEGVFS), serve as a signal peptide directing secretion. 6 Cadherin domains span residues 19–122 (QLHY…PPSF), 123–250 (PEPD…VPAF), 251–358 (DQPV…APEI), 359–463 (SFST…APRF), 464–574 (SQPV…APAI), and 582–690 (NGTP…GGGG). Residues 19–715 (QLHYTVQEEQ…GGGETSLDLT (697 aa)) are Extracellular-facing. The span at 207-223 (GGGGGVGEGGGGGGGAG) shows a compositional bias: gly residues. The tract at residues 207–228 (GGGGGVGEGGGGGGGAGLPPQQ) is disordered. The N-linked (GlcNAc...) asparagine glycan is linked to N273. N557 carries N-linked (GlcNAc...) asparagine glycosylation. Residues 686–697 (QGGGGSGGGGSG) show a composition bias toward gly residues. The disordered stretch occupies residues 686 to 708 (QGGGGSGGGGSGEHQRPSRSGGG). Residues 716 to 736 (LILIIALGSVSFIFLLAMIVL) traverse the membrane as a helical segment. The Cytoplasmic portion of the chain corresponds to 737–1040 (AVRCQKEKKL…PPYLTRKRIC (304 aa)). Residues 899–927 (AFQEADIVSSKDSGHGDSEQGDSDHDATN) form a disordered region. Residues 910 to 926 (DSGHGDSEQGDSDHDAT) show a composition bias toward basic and acidic residues.

In terms of tissue distribution, moderately expressed in all regions of the brain examined, as well as in testis and ovary, and low expression in all other tissues tested.

It localises to the cell membrane. Potential calcium-dependent cell-adhesion protein. Functionally, (Microbial infection) Acts as a receptor for Western equine encephalitis virus. This chain is Protocadherin-10 (PCDH10), found in Homo sapiens (Human).